The sequence spans 266 residues: Methionine aminopeptidase (266 aa).

Residue His80 participates in substrate binding. A divalent metal cation is bound by residues Asp98, Asp109, and His172. Substrate is bound at residue His179. Residues Glu206 and Glu237 each contribute to the a divalent metal cation site.

The protein belongs to the peptidase M24A family. Methionine aminopeptidase type 1 subfamily. In terms of assembly, monomer. Requires Co(2+) as cofactor. It depends on Zn(2+) as a cofactor. Mn(2+) is required as a cofactor. Fe(2+) serves as cofactor.

It catalyses the reaction Release of N-terminal amino acids, preferentially methionine, from peptides and arylamides.. In terms of biological role, removes the N-terminal methionine from nascent proteins. The N-terminal methionine is often cleaved when the second residue in the primary sequence is small and uncharged (Met-Ala-, Cys, Gly, Pro, Ser, Thr, or Val). Requires deformylation of the N(alpha)-formylated initiator methionine before it can be hydrolyzed. This is Methionine aminopeptidase from Buchnera aphidicola subsp. Baizongia pistaciae (strain Bp).